The primary structure comprises 159 residues: Large ribosomal subunit protein uL11 (159 aa).

Belongs to the universal ribosomal protein uL11 family. Part of the ribosomal stalk of the 50S ribosomal subunit. Interacts with L10 and the large rRNA to form the base of the stalk. L10 forms an elongated spine to which L12 dimers bind in a sequential fashion forming a multimeric L10(L12)X complex.

Forms part of the ribosomal stalk which helps the ribosome interact with GTP-bound translation factors. The polypeptide is Large ribosomal subunit protein uL11 (Methanococcus maripaludis (strain C6 / ATCC BAA-1332)).